Reading from the N-terminus, the 205-residue chain is Holliday junction branch migration complex subunit RuvA (205 aa).

The segment at 1–64 (MIGKLKGTID…EDQLKLFGFL (64 aa)) is domain I. Positions 65–143 (SALEREWFRL…AFVGEMAPSI (79 aa)) are domain II. The tract at residues 144 to 153 (GLKQELGEGV) is flexible linker. The interval 153 to 205 (VAAAPVSDAVSALTNLGYSRDQAANAVAAALKNGGEGADSARLIRLGLKELSR) is domain III.

The protein belongs to the RuvA family. As to quaternary structure, homotetramer. Forms an RuvA(8)-RuvB(12)-Holliday junction (HJ) complex. HJ DNA is sandwiched between 2 RuvA tetramers; dsDNA enters through RuvA and exits via RuvB. An RuvB hexamer assembles on each DNA strand where it exits the tetramer. Each RuvB hexamer is contacted by two RuvA subunits (via domain III) on 2 adjacent RuvB subunits; this complex drives branch migration. In the full resolvosome a probable DNA-RuvA(4)-RuvB(12)-RuvC(2) complex forms which resolves the HJ.

The protein resides in the cytoplasm. Functionally, the RuvA-RuvB-RuvC complex processes Holliday junction (HJ) DNA during genetic recombination and DNA repair, while the RuvA-RuvB complex plays an important role in the rescue of blocked DNA replication forks via replication fork reversal (RFR). RuvA specifically binds to HJ cruciform DNA, conferring on it an open structure. The RuvB hexamer acts as an ATP-dependent pump, pulling dsDNA into and through the RuvAB complex. HJ branch migration allows RuvC to scan DNA until it finds its consensus sequence, where it cleaves and resolves the cruciform DNA. In Sinorhizobium medicae (strain WSM419) (Ensifer medicae), this protein is Holliday junction branch migration complex subunit RuvA.